The sequence spans 418 residues: Tol-Pal system protein TolB (418 aa).

Residues 1–21 (MKLFVQLVLFISLFIPYSTKA) form the signal peptide.

The protein belongs to the TolB family. The Tol-Pal system is composed of five core proteins: the inner membrane proteins TolA, TolQ and TolR, the periplasmic protein TolB and the outer membrane protein Pal. They form a network linking the inner and outer membranes and the peptidoglycan layer.

It is found in the periplasm. Its function is as follows. Part of the Tol-Pal system, which plays a role in outer membrane invagination during cell division and is important for maintaining outer membrane integrity. The sequence is that of Tol-Pal system protein TolB from Wolbachia pipientis subsp. Culex pipiens (strain wPip).